We begin with the raw amino-acid sequence, 371 residues long: Cathepsin W (371 aa).

Positions 1 to 21 (MTLTAHLSYFLVLLLAGQGLS) are cleaved as a signal peptide. A propeptide spanning residues 22–125 (DSLLTKDAGP…KVESNTWGES (104 aa)) is cleaved from the precursor. N-linked (GlcNAc...) asparagine glycosylation is found at N48 and N112. 3 disulfides stabilise this stretch: C148-C189, C182-C224, and C282-C347. The active site involves C151. N203 is a glycosylation site (N-linked (GlcNAc...) asparagine). Active-site residues include H289 and N326. N344 carries an N-linked (GlcNAc...) asparagine glycan.

It belongs to the peptidase C1 family.

The protein localises to the endoplasmic reticulum. In terms of biological role, may have a specific function in the mechanism or regulation of T-cell cytolytic activity. The chain is Cathepsin W (Ctsw) from Mus musculus (Mouse).